Consider the following 347-residue polypeptide: Anthranilate phosphoribosyltransferase (347 aa).

5-phospho-alpha-D-ribose 1-diphosphate is bound by residues Gly82, 85–86, Thr90, 92–95, 110–118, and Thr122; these read GD, NIST, and KHGNRAITS. Gly82 contacts anthranilate. A Mg(2+)-binding site is contributed by Ser94. An anthranilate-binding site is contributed by Asn113. Arg168 is a binding site for anthranilate. Asp226 and Glu227 together coordinate Mg(2+).

It belongs to the anthranilate phosphoribosyltransferase family. As to quaternary structure, homodimer. It depends on Mg(2+) as a cofactor.

It carries out the reaction N-(5-phospho-beta-D-ribosyl)anthranilate + diphosphate = 5-phospho-alpha-D-ribose 1-diphosphate + anthranilate. The protein operates within amino-acid biosynthesis; L-tryptophan biosynthesis; L-tryptophan from chorismate: step 2/5. Its function is as follows. Catalyzes the transfer of the phosphoribosyl group of 5-phosphorylribose-1-pyrophosphate (PRPP) to anthranilate to yield N-(5'-phosphoribosyl)-anthranilate (PRA). This chain is Anthranilate phosphoribosyltransferase, found in Caulobacter sp. (strain K31).